Here is a 953-residue protein sequence, read N- to C-terminus: Leucine-rich repeat receptor protein kinase HPCA1 (953 aa).

The signal sequence occupies residues Met-1 to Ala-23. Residues Leu-24–Ser-558 lie on the Extracellular side of the membrane. LRR repeat units lie at residues Asn-64 to Leu-88, Ser-89 to Leu-113, Lys-115 to Leu-137, Lys-138 to Ser-162, Leu-164 to Pro-187, and Leu-192 to Ser-216. N-linked (GlcNAc...) asparagine glycosylation occurs at Asn-182. Asn-217 is a glycosylation site (N-linked (GlcNAc...) asparagine). LRR repeat units lie at residues Met-218 to Val-241, Lys-242 to Leu-265, Thr-266 to Ser-290, Tyr-292 to Ser-311, Leu-313 to Pro-337, Gln-339 to Ser-361, and Ser-362 to Val-384. 3 N-linked (GlcNAc...) asparagine glycosylation sites follow: Asn-264, Asn-284, and Asn-298. Asn-411 is a glycosylation site (N-linked (GlcNAc...) asparagine). 2 disulfides stabilise this stretch: Cys-421/Cys-424 and Cys-434/Cys-436. N-linked (GlcNAc...) asparagine glycosylation is found at Asn-456, Asn-459, Asn-510, and Asn-523. Residues Ile-559 to Ile-579 form a helical membrane-spanning segment. The Cytoplasmic segment spans residues Tyr-580–Gln-953. Phosphoserine is present on residues Ser-606 and Ser-607. The region spanning Phe-631–Met-905 is the Protein kinase domain. ATP contacts are provided by residues Val-637–Val-645 and Lys-659. Catalysis depends on Asp-755, which acts as the Proton acceptor. Phosphothreonine is present on residues Thr-786, Thr-789, and Thr-790. The span at Pro-912–Arg-921 shows a compositional bias: polar residues. The disordered stretch occupies residues Pro-912–Gln-953. Residue Ser-942 is modified to Phosphoserine.

This sequence belongs to the protein kinase superfamily. Ser/Thr protein kinase family. In terms of processing, autophosphorylated at Ser-606, Ser-607, Thr-786, Thr-789, Thr-790 and Ser-942 in response to extracellular hydrogen peroxide. Widely expressed.

The protein localises to the cell membrane. It carries out the reaction L-seryl-[protein] + ATP = O-phospho-L-seryl-[protein] + ADP + H(+). It catalyses the reaction L-threonyl-[protein] + ATP = O-phospho-L-threonyl-[protein] + ADP + H(+). With respect to regulation, activated by autophosphorylation on serine and threonine residues in response to extracellular hydrogen peroxide. Its function is as follows. Leucine-rich repeat receptor protein kinase that acts as sensor of extracellular hydrogen peroxide. Required for intracellular calcium influx in response to extracellular hydrogen peroxide. Mediates hydrogen peroxide-induced activation of calcium channels in guard cells and is required for stomatal closure. The chain is Leucine-rich repeat receptor protein kinase HPCA1 from Arabidopsis thaliana (Mouse-ear cress).